The sequence spans 231 residues: Putative cobalt transport protein CbiM 1 (231 aa).

The next 6 helical transmembrane spans lie at 8–28, 41–61, 74–94, 97–117, 138–158, and 175–195; these read LPLQ…AYGI, TLPL…LKMP, GLGA…IVLV, ALFL…SMGI, IVNV…ITSI, and FITF…IEGI.

It belongs to the CbiM family. As to quaternary structure, forms an energy-coupling factor (ECF) transporter complex composed of an ATP-binding protein (A component, CbiO), a transmembrane protein (T component, CbiQ) and 2 possible substrate-capture proteins (S components, CbiM and CbiN) of unknown stoichimetry.

The protein localises to the cell membrane. It functions in the pathway cofactor biosynthesis; adenosylcobalamin biosynthesis. Its function is as follows. Part of the energy-coupling factor (ECF) transporter complex CbiMNOQ involved in cobalt import. The chain is Putative cobalt transport protein CbiM 1 from Methanosphaerula palustris (strain ATCC BAA-1556 / DSM 19958 / E1-9c).